A 387-amino-acid polypeptide reads, in one-letter code: Short-chain dehydrogenase/reductase family 42E member 1 (387 aa).

The active-site Proton acceptor is Tyr-149. Position 153 (Lys-153) interacts with NAD(+). Transmembrane regions (helical) follow at residues 279-299 (LPISMIYFFAFLTEMVHFVVG) and 365-385 (ILDVFVVVAFVAVLLSCLPVV).

Belongs to the 3-beta-HSD family.

The protein localises to the membrane. This is Short-chain dehydrogenase/reductase family 42E member 1 (sdr42e1) from Danio rerio (Zebrafish).